The chain runs to 352 residues: Pyruvate dehydrogenase E1 component subunit beta, mitochondrial (352 aa).

The transit peptide at 1–21 directs the protein to the mitochondrion; that stretch reads MALRKCGNLFVARLAGTSTRA. Position 81 (glutamate 81) interacts with thiamine diphosphate. Residues isoleucine 134, alanine 182, isoleucine 183, aspartate 185, and asparagine 187 each contribute to the K(+) site.

Tetramer of 2 alpha and 2 beta subunits. Thiamine diphosphate is required as a cofactor.

The protein localises to the mitochondrion matrix. It catalyses the reaction N(6)-[(R)-lipoyl]-L-lysyl-[protein] + pyruvate + H(+) = N(6)-[(R)-S(8)-acetyldihydrolipoyl]-L-lysyl-[protein] + CO2. Functionally, the pyruvate dehydrogenase complex catalyzes the overall conversion of pyruvate to acetyl-CoA and CO(2). It contains multiple copies of three enzymatic components: pyruvate dehydrogenase (E1), dihydrolipoamide acetyltransferase (E2) and lipoamide dehydrogenase (E3). The polypeptide is Pyruvate dehydrogenase E1 component subunit beta, mitochondrial (pdhb-1) (Caenorhabditis elegans).